The following is a 37-amino-acid chain: U4-theraphotoxin-Hhn1v (37 aa).

Cystine bridges form between cysteine 3–cysteine 17, cysteine 7–cysteine 28, and cysteine 22–cysteine 33.

This sequence belongs to the neurotoxin 12 (Hwtx-2) family. 02 (Hwtx-2) subfamily. In terms of tissue distribution, expressed by the venom gland.

Its subcellular location is the secreted. Functionally, postsynaptic neurotoxin. The chain is U4-theraphotoxin-Hhn1v from Cyriopagopus hainanus (Chinese bird spider).